We begin with the raw amino-acid sequence, 394 residues long: MKRQRNVNLLLMLVLLVAVGQMAQTIYIPAIADMARDLNVREGAVQSVMGAYLLTYGVSQLFYGPISDRVGRRPVILVGMSIFMLATLVAVTTSSLTVLIAASAMQGMGTGVGGVMARTLPRDLYERTQLRHANSLLNMGILVSPLLAPLIGGLLDTMWNWRACYLFLLVLCAGVTFSMARWMPETRPVDAPRTRLLTSYKTLFGNSGFNCYLLMLIGGLAGIAAFEACSGVLMGAVLGLSSMTVSILFILPIPAAFFGAWFAGRPNKRFSTLMWQSVICCLLAGLLMWIPDWFGVMNVWTLLVPAALFFFGAGMLFPLATSGAMEPFPFLAGTAGALVGGLQNIGSGVLASLSAMLPQTGQGSLGLLMTLMGLLIVLCWLPLATRMSHQGQPV.

Over M1–N8 the chain is Cytoplasmic. A helical transmembrane segment spans residues L9 to P29. Residues A30 to Q46 lie on the Periplasmic side of the membrane. A helical membrane pass occupies residues S47–S67. The Cytoplasmic segment spans residues D68–R73. The chain crosses the membrane as a helical span at residues P74–S94. A topological domain (periplasmic) is located at residue S95. A helical membrane pass occupies residues L96–M116. Residues A117–N134 are Cytoplasmic-facing. A helical transmembrane segment spans residues S135–L155. The Periplasmic segment spans residues D156 to R162. The chain crosses the membrane as a helical span at residues A163–M183. Over P184–Y212 the chain is Cytoplasmic. Residues L213–L233 traverse the membrane as a helical segment. Topologically, residues M234–S242 are periplasmic. A helical membrane pass occupies residues M243–A263. Residues G264 to Q276 lie on the Cytoplasmic side of the membrane. Residues S277 to M297 traverse the membrane as a helical segment. N298 is a topological domain (periplasmic). A helical membrane pass occupies residues V299–L319. At A320–P329 the chain is on the cytoplasmic side. A helical transmembrane segment spans residues F330–L350. Over A351–S364 the chain is Periplasmic. The chain crosses the membrane as a helical span at residues L365–T385. The Cytoplasmic segment spans residues R386–V394.

This sequence belongs to the major facilitator superfamily.

Its subcellular location is the cell inner membrane. Functionally, multidrug resistance pump that participates in a low energy shock adaptive response. This is Multidrug resistance protein D (emrD) from Escherichia coli (strain K12).